Reading from the N-terminus, the 924-residue chain is MDTLEEPECPPHKNRIFVSSSKDFEGYPSKAIVPVQFVALLTSIHLTETKCLLGFSNFERRGDQSQEDQYLIKLKFKDRGSERLARITISLLCQYFDIELPDLDSDSGASPTVILRDIHLERLCFSSCKALYVSKHGNYTLFLEDIKPLDLVSVISTISTKSTNSSKHSSSELISECDLNNSLVDIFNNLIEMNRDEKNRFKFVKLIHYDIELKKFVQDQQKVLSQKSKAAAINPFFVPNRLGIPYIESQNEFNSQLMTLNVDEPTTDISNMGEEMHDSADPIEDSDSSTTSSTGKYFSSKSYIQSQTPERKTSVPNNWHDDDSGSKRKRKLSFHSPNASSIRKAISYEQLSLASVGSVERLEGKIVGMNPPQFASINEFKYCTLKLYFTQLLPNVPDKVLVPGVNCIEIVIPTRERICELFGVLNCQSDKISDILLLEKPDRISVEVERILWDNDKTASPGMAVWSLKNISTDTQAQAQVQVPAQSSASIDPSRTRMSKMARKDPTIEFCQLGLDTFETKYITMFGMLVSCSFDKPAFISFVFSDFTKNDIVQNYLYDRYLIDYENKLELNEGFKAIMYKNQFETFDSKLRKIFNNGLRDLQNGRDENLSQYGIVCKMNIKVKMYNGKLNAIVRECEPVPHSQISSIASPSQCEHLRLFYQRAFKRIGESAISRYFEEYRRFFPIHRNGSHLAKLRFDEVKHEPKKSPTTPALAEHIPDLNADVSSFDVKFTDISSLLDSSARLPRPQQTHKSNTLYSCEGRIIAIEYHASDLCFHITNELPLLQTRGLAPERVLQLHIITSKNFAYFFNRSSAYLQRQPLEEKYTQLAQFLGHSFKFNITSSLTLFPDTTVALQIWCPIECTFRELQQQLAHPKVAAAPDSGSLDCAINATVNPLRLLAAQNGVTVKKEEDNDDDAGAVPTS.

The disordered stretch occupies residues 265–336 (PTTDISNMGE…KRKRKLSFHS (72 aa)). The span at 295 to 308 (GKYFSSKSYIQSQT) shows a compositional bias: polar residues. Ser306 carries the post-translational modification Phosphoserine. A Phosphothreonine modification is found at Thr308. Basic and acidic residues predominate over residues 309 to 326 (PERKTSVPNNWHDDDSGS). Ser333 is subject to Phosphoserine. The OB DNA-binding region spans 500–686 (KMARKDPTIE…FEEYRRFFPI (187 aa)).

In terms of assembly, interacts with POL1, EST1, FUN12, STM1, STN1 and TEN1.

It is found in the chromosome. It localises to the telomere. Single-stranded telomeric DNA-binding protein that regulates telomere replication. Has a role in both positive and negative regulation. Promotes [TG(1-3)] strand lengthening via interaction with EST1. Promotes [C(1-3)A] strand re-synthesis by DNA polymerase alpha via interaction with POL1. Negatively regulates telomere elongation of the G strand via binding with STN1 thereby inhibiting telomerase activity. The polypeptide is Cell division control protein 13 (CDC13) (Saccharomyces cerevisiae (strain ATCC 204508 / S288c) (Baker's yeast)).